Consider the following 327-residue polypeptide: ATPase GET3 (327 aa).

Residue 27–34 participates in ATP binding; it reads KGGVGKTT. The active site involves aspartate 56. Residues glutamate 231 and asparagine 258 each coordinate ATP. Zn(2+) contacts are provided by cysteine 269 and cysteine 272.

It belongs to the arsA ATPase family. As to quaternary structure, homodimer. Component of the Golgi to ER traffic (GET) complex, which is composed of GET1, GET2 and GET3. Within the complex, GET1 and GET2 form a heterotetramer which is stabilized by phosphatidylinositol binding and which binds to the GET3 homodimer. Interacts with the chloride channel protein GEF1.

The protein resides in the cytoplasm. The protein localises to the endoplasmic reticulum. It is found in the golgi apparatus. In terms of biological role, ATPase required for the post-translational delivery of tail-anchored (TA) proteins to the endoplasmic reticulum. Recognizes and selectively binds the transmembrane domain of TA proteins in the cytosol. This complex then targets to the endoplasmic reticulum by membrane-bound receptors GET1 and GET2, where the tail-anchored protein is released for insertion. This process is regulated by ATP binding and hydrolysis. ATP binding drives the homodimer towards the closed dimer state, facilitating recognition of newly synthesized TA membrane proteins. ATP hydrolysis is required for insertion. Subsequently, the homodimer reverts towards the open dimer state, lowering its affinity for the GET1-GET2 receptor, and returning it to the cytosol to initiate a new round of targeting. Cooperates with the HDEL receptor ERD2 to mediate the ATP-dependent retrieval of resident ER proteins that contain a C-terminal H-D-E-L retention signal from the Golgi to the ER. Involved in low-level resistance to the oxyanions arsenite and arsenate, and in heat tolerance. In Yarrowia lipolytica (strain CLIB 122 / E 150) (Yeast), this protein is ATPase GET3.